The following is a 660-amino-acid chain: Threonine--tRNA ligase (660 aa).

The TGS domain maps to 1–49 (MPINEIRVQKGQRYRDAINDKKVIAVKKGDKFLDLDEIAGEDEAVQPVY). The catalytic stretch occupies residues 225-554 (DHRKIIAEMD…LLEHFAGKLP (330 aa)). C318, H369, and H531 together coordinate Zn(2+).

It belongs to the class-II aminoacyl-tRNA synthetase family. Homodimer. Zn(2+) serves as cofactor.

The protein resides in the cytoplasm. It catalyses the reaction tRNA(Thr) + L-threonine + ATP = L-threonyl-tRNA(Thr) + AMP + diphosphate + H(+). Catalyzes the attachment of threonine to tRNA(Thr) in a two-step reaction: L-threonine is first activated by ATP to form Thr-AMP and then transferred to the acceptor end of tRNA(Thr). This Thermoplasma volcanium (strain ATCC 51530 / DSM 4299 / JCM 9571 / NBRC 15438 / GSS1) protein is Threonine--tRNA ligase.